We begin with the raw amino-acid sequence, 344 residues long: Adenosine kinase 1 (344 aa).

Aspartate 299 is a catalytic residue.

Belongs to the carbohydrate kinase PfkB family. Interacts with the begomovirus AL2 protein and the curtovirus L2 protein. Requires Mg(2+) as cofactor. As to expression, widely expressed.

It carries out the reaction adenosine + ATP = AMP + ADP + H(+). Its pathway is purine metabolism; AMP biosynthesis via salvage pathway; AMP from adenosine: step 1/1. Inactivated by the begomovirus AL2 protein or the curtovirus L2 protein. Its function is as follows. ATP dependent phosphorylation of adenosine and other related nucleoside analogs to monophosphate derivatives. Essential to sustain methyl recycling. The chain is Adenosine kinase 1 from Arabidopsis thaliana (Mouse-ear cress).